We begin with the raw amino-acid sequence, 602 residues long: Elongation factor 4 (602 aa).

The region spanning 7–189 (SKIRNFCIIA…AIVRRVPPPQ (183 aa)) is the tr-type G domain. GTP-binding positions include 19 to 24 (DHGKST) and 136 to 139 (NKVD).

Belongs to the TRAFAC class translation factor GTPase superfamily. Classic translation factor GTPase family. LepA subfamily.

It localises to the cell inner membrane. It catalyses the reaction GTP + H2O = GDP + phosphate + H(+). Required for accurate and efficient protein synthesis under certain stress conditions. May act as a fidelity factor of the translation reaction, by catalyzing a one-codon backward translocation of tRNAs on improperly translocated ribosomes. Back-translocation proceeds from a post-translocation (POST) complex to a pre-translocation (PRE) complex, thus giving elongation factor G a second chance to translocate the tRNAs correctly. Binds to ribosomes in a GTP-dependent manner. This is Elongation factor 4 from Prochlorococcus marinus (strain MIT 9215).